The following is a 481-amino-acid chain: Transcription factor TGA9 (481 aa).

The segment at 91–181 is disordered; it reads QTLPTESSKS…GKQLDAKTLR (91 aa). Over residues 97–109 the composition is skewed to low complexity; it reads SSKSGGESSDSGS. The segment covering 110–126 has biased composition (polar residues); that stretch reads ANFSGKAESQQPESPMS. Positions 143–155 are enriched in low complexity; the sequence is SSSTSGLPSTSRT. The short motif at 165 to 172 is the Nuclear localization signal element; the sequence is KRKATTSG. A bZIP domain is found at 176-220; that stretch reads DAKTLRRLAQNREAARKSRLRKKAYVQQLESSRIKLSQLEQELQR. The segment at 178–198 is basic motif; the sequence is KTLRRLAQNREAARKSRLRKK. The tract at residues 204–218 is leucine-zipper; the sequence is LESSRIKLSQLEQEL. In terms of domain architecture, DOG1 spans 242–450; the sequence is AAIFDMEYGR…RALSSLWLSR (209 aa).

The protein belongs to the bZIP family. In terms of assembly, homodimer. Binds DNA as a dimer. Interacts with floral glutaredoxins GRXC7/ROXY1 and GRXC8/ROXY2 in the nucleus. Interacts with TGA1, TGA2, TGA3, TGA4, TGA5, TGA6, TGA7, TGA10 and PAN. In terms of tissue distribution, mostly expressed in stems, inflorescence apex and flowers, and, to a lower extent, in seedlings, leaves and siliques.

The protein resides in the nucleus. Its function is as follows. Together with TGA10, basic leucine-zipper transcription factor required for anther development, probably via the activation of SPL expression in anthers and via the regulation of genes with functions in early and middle tapetal development. Required for signaling responses to pathogen-associated molecular patterns (PAMPs) such as flg22 that involves chloroplastic reactive oxygen species (ROS) production and subsequent expression of H(2)O(2)-responsive genes. In Arabidopsis thaliana (Mouse-ear cress), this protein is Transcription factor TGA9.